The sequence spans 223 residues: ATP synthase subunit a 1 (223 aa).

Transmembrane regions (helical) follow at residues 20–40 (LTIA…AFAS), 78–98 (YLPY…CTII), 108–128 (LSTT…FGIA), 174–194 (MILA…MSVL), and 196–216 (LLTG…YISA).

It belongs to the ATPase A chain family. As to quaternary structure, F-type ATPases have 2 components, CF(1) - the catalytic core - and CF(0) - the membrane proton channel. CF(1) has five subunits: alpha(3), beta(3), gamma(1), delta(1), epsilon(1). CF(0) has four main subunits: a, b, b' and c.

The protein localises to the cell inner membrane. Functionally, key component of the proton channel; it plays a direct role in the translocation of protons across the membrane. The protein is ATP synthase subunit a 1 of Chlorobium luteolum (strain DSM 273 / BCRC 81028 / 2530) (Pelodictyon luteolum).